The chain runs to 100 residues: Small ribosomal subunit protein uS14c (100 aa).

The protein belongs to the universal ribosomal protein uS14 family. Part of the 30S ribosomal subunit.

The protein localises to the plastid. It localises to the chloroplast. Binds 16S rRNA, required for the assembly of 30S particles. The sequence is that of Small ribosomal subunit protein uS14c from Chlorella vulgaris (Green alga).